Reading from the N-terminus, the 164-residue chain is UPF0303 protein Smed_2872 (164 aa).

This sequence belongs to the UPF0303 family.

In Sinorhizobium medicae (strain WSM419) (Ensifer medicae), this protein is UPF0303 protein Smed_2872.